The sequence spans 478 residues: Growth/differentiation factor 10 (478 aa).

The first 33 residues, 1 to 33, serve as a signal peptide directing secretion; the sequence is MARGPARTSLGPGSQQLPLLSLLLLLLLRDADG. The segment at 34–70 is disordered; the sequence is SHTAAARPPPPAAADGLAGDKNPQRSPGDVAAAQSPG. A propeptide spanning residues 34–368 is cleaved from the precursor; sequence SHTAAARPPP…EKTMQKARKK (335 aa). N-linked (GlcNAc...) asparagine glycosylation is found at Asn118, Asn155, and Asn280. The tract at residues 267-345 is disordered; sequence PFQAGDPEPG…GRKDRRKKGQ (79 aa). Over residues 291–301 the composition is skewed to polar residues; sequence TQATGPLQNNE. Residues 331-343 are compositionally biased toward basic residues; that stretch reads LKPRPGRKDRRKK. Disulfide bonds link Cys376-Cys443, Cys405-Cys475, and Cys409-Cys477. Asn469 is a glycosylation site (N-linked (GlcNAc...) asparagine).

Belongs to the TGF-beta family. In terms of assembly, homodimer or heterodimer. Can form a non-covalent complex of the mature region and the pro-region.

Its subcellular location is the secreted. In terms of biological role, growth factor involved in osteogenesis and adipogenesis. Plays an inhibitory role in the process of osteoblast differentiation via SMAD2/3 pathway. Plays an inhibitory role in the process of adipogenesis. The chain is Growth/differentiation factor 10 (GDF10) from Bos taurus (Bovine).